A 502-amino-acid polypeptide reads, in one-letter code: Aspartyl/glutamyl-tRNA(Asn/Gln) amidotransferase subunit B (502 aa).

Belongs to the GatB/GatE family. GatB subfamily. As to quaternary structure, heterotrimer of A, B and C subunits.

The catalysed reaction is L-glutamyl-tRNA(Gln) + L-glutamine + ATP + H2O = L-glutaminyl-tRNA(Gln) + L-glutamate + ADP + phosphate + H(+). It catalyses the reaction L-aspartyl-tRNA(Asn) + L-glutamine + ATP + H2O = L-asparaginyl-tRNA(Asn) + L-glutamate + ADP + phosphate + 2 H(+). Functionally, allows the formation of correctly charged Asn-tRNA(Asn) or Gln-tRNA(Gln) through the transamidation of misacylated Asp-tRNA(Asn) or Glu-tRNA(Gln) in organisms which lack either or both of asparaginyl-tRNA or glutaminyl-tRNA synthetases. The reaction takes place in the presence of glutamine and ATP through an activated phospho-Asp-tRNA(Asn) or phospho-Glu-tRNA(Gln). This Arthrobacter sp. (strain FB24) protein is Aspartyl/glutamyl-tRNA(Asn/Gln) amidotransferase subunit B.